A 315-amino-acid polypeptide reads, in one-letter code: Uracil-DNA glycosylase (315 aa).

A compositionally biased stretch (low complexity) spans 35 to 80; it reads AAAAAPAGAGAGASKPARPPAAARPAKGTPAASAATTATGADASAP. The tract at residues 35–88 is disordered; that stretch reads AAAAAPAGAGAGASKPARPPAAARPAKGTPAASAATTATGADASAPAPDPGAPT. D158 acts as the Proton acceptor in catalysis.

This sequence belongs to the uracil-DNA glycosylase (UDG) superfamily. UNG family.

The protein localises to the host nucleus. The catalysed reaction is Hydrolyzes single-stranded DNA or mismatched double-stranded DNA and polynucleotides, releasing free uracil.. Excises uracil residues from the DNA which can arise as a result of misincorporation of dUMP residues by DNA polymerase or deamination of cytosines. Therefore may reduce deleterious uracil incorporation into the viral genome, particularly in terminally differentiated cells which lack DNA repair enzymes. The sequence is that of Uracil-DNA glycosylase (UL2) from Suid herpesvirus 1 (strain Indiana-Funkhauser / Becker) (SuHV-1).